Reading from the N-terminus, the 323-residue chain is V-type ATP synthase subunit C (323 aa).

The protein belongs to the V-ATPase V0D/AC39 subunit family.

Its function is as follows. Produces ATP from ADP in the presence of a proton gradient across the membrane. This chain is V-type ATP synthase subunit C, found in Thermus thermophilus (strain ATCC BAA-163 / DSM 7039 / HB27).